Consider the following 272-residue polypeptide: NADPH-dependent aldehyde reductase 2, chloroplastic (272 aa).

The N-terminal 53 residues, 1–53 (MAAASSVSSPPLCLAGRVAIVTGSSRGIGRAIAIHLAELGARVVVNYSTSPVE), are a transit peptide targeting the chloroplast. 26 to 50 (RGIGRAIAIHLAELGARVVVNYSTS) is a binding site for NADP(+). S165 is a substrate binding site. The active-site Proton acceptor is Y179.

It belongs to the short-chain dehydrogenases/reductases (SDR) family.

It localises to the plastid. It is found in the chloroplast. Aldehyde reductase that catalyzes the reduction of the aldehyde carbonyl groups on saturated and alpha,beta-unsaturated aldehydes with more than 5 carbons. No activity on alpha,beta-unsaturated ketones. Can use propionaldehyde, butyraldehyde, methylglyoxal, (e)-2-pentenal, (E)-2-hexenal, (Z)-3-hexenal and (E)-2-nonenal as substrates, but not propenal (acrolein), crotonaldehyde, 2-butanone, 3-buten-2-one or 1-penten-3-one. The sequence is that of NADPH-dependent aldehyde reductase 2, chloroplastic from Arabidopsis thaliana (Mouse-ear cress).